Here is a 213-residue protein sequence, read N- to C-terminus: MSQKVLPTKINLIQFRRQLRLITVIKRLLENKREVLLLYLRTYASQYEKIYNEVNEEMKKVYESYLQAVASEGISNIEEMALSQKPSLEVNSAIKVIFGVKVPTIRLDKSTIPAKPFSDVETSPYLSESYEEMTEALNKIIELVELESTIRSLVSELRKTQRLINSIDNYILPFYRGSIKFIKQILEDRQREEFSRLKIIRRILQRRRESGSR.

Belongs to the V-ATPase D subunit family. Has multiple subunits with at least A(3), B(3), C, D, E, F, H, I and proteolipid K(x).

The protein localises to the cell membrane. Component of the A-type ATP synthase that produces ATP from ADP in the presence of a proton gradient across the membrane. The polypeptide is A-type ATP synthase subunit D (Saccharolobus solfataricus (strain ATCC 35092 / DSM 1617 / JCM 11322 / P2) (Sulfolobus solfataricus)).